A 418-amino-acid chain; its full sequence is Nuclear hormone receptor 114 (418 aa).

Residues 12–87 constitute a DNA-binding region (nuclear receptor); the sequence is DHVCLVCQDF…VGMDRNALQQ (76 aa). NR C4-type zinc fingers lie at residues 15-35 and 51-70; these read CLVCQDFASGYHYGVPSCVGC and CQFEGNCPVDKTIRCACRYC. Positions 89-130 are disordered; sequence RDPIGYTKRTRRPKKELKTTSDCSSDEGASTPPSVSPLQLSP. The NR LBD domain occupies 170–409; it reads PIRSLHEALC…AFARQLFFGD (240 aa). The interval 398-409 is AF-2; sequence FSAFARQLFFGD.

It belongs to the nuclear hormone receptor family. As to expression, expressed in germ and intestinal cells and at low levels in the hypodermis.

It is found in the nucleus. In terms of biological role, probable transcription factor which may have a role in detoxifying dietary metabolites arising from bacterial tryptophan metabolism. Required for fertility and involved in proper postembryonic germline development, especially germline stem cell (GSC) proliferation. Required for activation of the methionine/S-adenosylmethionine (Met/SAM) cycle in response to low levels of SAM. The polypeptide is Nuclear hormone receptor 114 (Caenorhabditis elegans).